The primary structure comprises 225 residues: Cytochrome c oxidase subunit 2 (225 aa).

The Mitochondrial intermembrane segment spans residues 1 to 25; it reads MSTWMMFMFQESNSFYADNLVSFHN. Residues 26–47 form a helical membrane-spanning segment; it reads LVMMIIIMISTLTIYIIFDLFM. Residues 48-62 are Mitochondrial matrix-facing; sequence NKFSNLFLLKNHNIE. A helical transmembrane segment spans residues 63–82; the sequence is IIWTIVPIVILLIICFPSLK. The Mitochondrial intermembrane segment spans residues 83 to 225; sequence ILYLIDEIIN…FFLNWINKQN (143 aa). Cu cation is bound by residues His-159, Cys-194, Glu-196, Cys-198, His-202, and Met-205. Mg(2+) is bound at residue Glu-196.

Belongs to the cytochrome c oxidase subunit 2 family. In terms of assembly, component of the cytochrome c oxidase (complex IV, CIV), a multisubunit enzyme composed of a catalytic core of 3 subunits and several supernumerary subunits. The complex exists as a monomer or a dimer and forms supercomplexes (SCs) in the inner mitochondrial membrane with ubiquinol-cytochrome c oxidoreductase (cytochrome b-c1 complex, complex III, CIII). It depends on Cu cation as a cofactor.

Its subcellular location is the mitochondrion inner membrane. It catalyses the reaction 4 Fe(II)-[cytochrome c] + O2 + 8 H(+)(in) = 4 Fe(III)-[cytochrome c] + 2 H2O + 4 H(+)(out). Functionally, component of the cytochrome c oxidase, the last enzyme in the mitochondrial electron transport chain which drives oxidative phosphorylation. The respiratory chain contains 3 multisubunit complexes succinate dehydrogenase (complex II, CII), ubiquinol-cytochrome c oxidoreductase (cytochrome b-c1 complex, complex III, CIII) and cytochrome c oxidase (complex IV, CIV), that cooperate to transfer electrons derived from NADH and succinate to molecular oxygen, creating an electrochemical gradient over the inner membrane that drives transmembrane transport and the ATP synthase. Cytochrome c oxidase is the component of the respiratory chain that catalyzes the reduction of oxygen to water. Electrons originating from reduced cytochrome c in the intermembrane space (IMS) are transferred via the dinuclear copper A center (CU(A)) of subunit 2 and heme A of subunit 1 to the active site in subunit 1, a binuclear center (BNC) formed by heme A3 and copper B (CU(B)). The BNC reduces molecular oxygen to 2 water molecules using 4 electrons from cytochrome c in the IMS and 4 protons from the mitochondrial matrix. The chain is Cytochrome c oxidase subunit 2 (COII) from Apis koschevnikovi (Koschevnikov's honey bee).